Reading from the N-terminus, the 382-residue chain is Intermediate transcription factor 3 large subunit (382 aa).

It belongs to the poxviruses A23 family. Heterodimer of a 45 kDa and a 32 kDa subunit.

Acts with RNA polymerase to initiate transcription from intermediate gene promoters. This chain is Intermediate transcription factor 3 large subunit (VITF3L), found in Monkeypox virus (strain Zaire-96-I-16) (MPX).